We begin with the raw amino-acid sequence, 89 residues long: Large ribosomal subunit protein bL27 (89 aa).

The disordered stretch occupies residues 1–22 (MAHKKAGGSSRNGRDSESKRLG).

Belongs to the bacterial ribosomal protein bL27 family.

The sequence is that of Large ribosomal subunit protein bL27 from Bartonella henselae (strain ATCC 49882 / DSM 28221 / CCUG 30454 / Houston 1) (Rochalimaea henselae).